The primary structure comprises 403 residues: Tryptophan synthase beta chain (403 aa).

K93 carries the N6-(pyridoxal phosphate)lysine modification.

This sequence belongs to the TrpB family. As to quaternary structure, tetramer of two alpha and two beta chains. Pyridoxal 5'-phosphate serves as cofactor.

It carries out the reaction (1S,2R)-1-C-(indol-3-yl)glycerol 3-phosphate + L-serine = D-glyceraldehyde 3-phosphate + L-tryptophan + H2O. The protein operates within amino-acid biosynthesis; L-tryptophan biosynthesis; L-tryptophan from chorismate: step 5/5. Its function is as follows. The beta subunit is responsible for the synthesis of L-tryptophan from indole and L-serine. In Acinetobacter baylyi (strain ATCC 33305 / BD413 / ADP1), this protein is Tryptophan synthase beta chain.